Here is a 349-residue protein sequence, read N- to C-terminus: Cobalt-precorrin-5B C(1)-methyltransferase (349 aa).

It belongs to the CbiD family.

It carries out the reaction Co-precorrin-5B + S-adenosyl-L-methionine = Co-precorrin-6A + S-adenosyl-L-homocysteine. It participates in cofactor biosynthesis; adenosylcobalamin biosynthesis; cob(II)yrinate a,c-diamide from sirohydrochlorin (anaerobic route): step 6/10. Its function is as follows. Catalyzes the methylation of C-1 in cobalt-precorrin-5B to form cobalt-precorrin-6A. The sequence is that of Cobalt-precorrin-5B C(1)-methyltransferase from Saccharolobus islandicus (strain M.16.27) (Sulfolobus islandicus).